The following is a 96-amino-acid chain: Large ribosomal subunit protein uL23 (96 aa).

It belongs to the universal ribosomal protein uL23 family. In terms of assembly, part of the 50S ribosomal subunit. Contacts protein L29, and trigger factor when it is bound to the ribosome.

Its function is as follows. One of the early assembly proteins it binds 23S rRNA. One of the proteins that surrounds the polypeptide exit tunnel on the outside of the ribosome. Forms the main docking site for trigger factor binding to the ribosome. The sequence is that of Large ribosomal subunit protein uL23 from Solidesulfovibrio magneticus (strain ATCC 700980 / DSM 13731 / RS-1) (Desulfovibrio magneticus).